The sequence spans 159 residues: 6,7-dimethyl-8-ribityllumazine synthase (159 aa).

Residues Phe23, 61-63 (SFE), and 85-87 (AVI) each bind 5-amino-6-(D-ribitylamino)uracil. Residue 90–91 (DT) participates in (2S)-2-hydroxy-3-oxobutyl phosphate binding. His93 functions as the Proton donor in the catalytic mechanism. 5-amino-6-(D-ribitylamino)uracil is bound at residue Phe118. Residue Arg132 participates in (2S)-2-hydroxy-3-oxobutyl phosphate binding.

It belongs to the DMRL synthase family.

The catalysed reaction is (2S)-2-hydroxy-3-oxobutyl phosphate + 5-amino-6-(D-ribitylamino)uracil = 6,7-dimethyl-8-(1-D-ribityl)lumazine + phosphate + 2 H2O + H(+). It participates in cofactor biosynthesis; riboflavin biosynthesis; riboflavin from 2-hydroxy-3-oxobutyl phosphate and 5-amino-6-(D-ribitylamino)uracil: step 1/2. In terms of biological role, catalyzes the formation of 6,7-dimethyl-8-ribityllumazine by condensation of 5-amino-6-(D-ribitylamino)uracil with 3,4-dihydroxy-2-butanone 4-phosphate. This is the penultimate step in the biosynthesis of riboflavin. The protein is 6,7-dimethyl-8-ribityllumazine synthase of Synechococcus sp. (strain RCC307).